Here is a 74-residue protein sequence, read N- to C-terminus: Large ribosomal subunit protein uL30 (74 aa).

This sequence belongs to the universal ribosomal protein uL30 family. As to quaternary structure, part of the 50S ribosomal subunit.

This Koribacter versatilis (strain Ellin345) protein is Large ribosomal subunit protein uL30.